The primary structure comprises 309 residues: Porphobilinogen deaminase (309 aa).

At C240 the chain carries S-(dipyrrolylmethanemethyl)cysteine.

It belongs to the HMBS family. In terms of assembly, monomer. Dipyrromethane is required as a cofactor.

The catalysed reaction is 4 porphobilinogen + H2O = hydroxymethylbilane + 4 NH4(+). It functions in the pathway porphyrin-containing compound metabolism; protoporphyrin-IX biosynthesis; coproporphyrinogen-III from 5-aminolevulinate: step 2/4. Tetrapolymerization of the monopyrrole PBG into the hydroxymethylbilane pre-uroporphyrinogen in several discrete steps. This is Porphobilinogen deaminase from Lawsonia intracellularis (strain PHE/MN1-00).